The following is a 137-amino-acid chain: MLMPKRTKFRKMHKGRNRGLANVGNKISFGEFGLKAMERGRMTSRQIEAARRVMTRKVKRGAKIWIRVFPDKPITNKPLEVRMGKGKGSVEYWVAQVQPGRVLYEMQGVDEVVAREAFELAAAKLPFKTQFVTRTVM.

Belongs to the universal ribosomal protein uL16 family. As to quaternary structure, part of the 50S ribosomal subunit.

Binds 23S rRNA and is also seen to make contacts with the A and possibly P site tRNAs. This is Large ribosomal subunit protein uL16 from Hydrogenovibrio crunogenus (strain DSM 25203 / XCL-2) (Thiomicrospira crunogena).